The chain runs to 238 residues: uncharacterized protein (238 aa).

The disordered stretch occupies residues 1 to 20 (MPNLHSLPLGTRPENAIRNN).

It belongs to the PEP2 family.

This is an uncharacterized protein from Emericella nidulans (strain FGSC A4 / ATCC 38163 / CBS 112.46 / NRRL 194 / M139) (Aspergillus nidulans).